The primary structure comprises 278 residues: ATP synthase subunit a (278 aa).

6 helical membrane-spanning segments follow: residues 41-61, 108-128, 149-168, 180-200, 222-242, and 244-264; these read FLNI…LLFF, LTIF…VDFV, INIT…YFGI, FFFQ…LELI, LIFI…LSVP, and AIFH…LTII.

This sequence belongs to the ATPase A chain family. F-type ATPases have 2 components, CF(1) - the catalytic core - and CF(0) - the membrane proton channel. CF(1) has five subunits: alpha(3), beta(3), gamma(1), delta(1), epsilon(1). CF(0) has three main subunits: a(1), b(2) and c(9-12). The alpha and beta chains form an alternating ring which encloses part of the gamma chain. CF(1) is attached to CF(0) by a central stalk formed by the gamma and epsilon chains, while a peripheral stalk is formed by the delta and b chains.

Its subcellular location is the cell membrane. Its function is as follows. Key component of the proton channel; it plays a direct role in the translocation of protons across the membrane. The chain is ATP synthase subunit a from Wigglesworthia glossinidia brevipalpis.